The primary structure comprises 421 residues: MYKNLKLNDKYVQKAINSEFKRQRNFIELIASENYVSDDVLKAQGSVLTNKYGEGYPYRRYYGSCENVDMVEQVAIDRLKEIFKVNYANVQPYSGSVANAAAIASVVPNGGKIMGLSLKSGGHLTHGYKISFSGIFYNSITYEVGKNGKLDYEEIKKIALAEKPDLIICGYSAYPRLIDFKKFREIADLCGAKLMADVAHIAGLIAGGVHPSPVGYAHVITSTTHKTFRGARGGVIMTNDEEIAKKVDRWVFPGYQGGPLFHAIAGKAIAFYEALQPSFKTYAENIVKNAKVFSEAFIKKGVEVVSGGTDNHLLLINVKSSYNITGKEAENFLEKINITINKNSIPFDELPPLVTSGIRLGTAAMTSRNFTKWEELAEIIDYSLRNLEFLNSKSKAARDKVKELKNRVLSFNKEFPILKKY.

Residues Leu118 and 122–124 (GHL) each bind (6S)-5,6,7,8-tetrahydrofolate. An N6-(pyridoxal phosphate)lysine modification is found at Lys226. Glu242 contributes to the (6S)-5,6,7,8-tetrahydrofolate binding site.

Belongs to the SHMT family. Homodimer. The cofactor is pyridoxal 5'-phosphate.

The protein localises to the cytoplasm. The catalysed reaction is (6R)-5,10-methylene-5,6,7,8-tetrahydrofolate + glycine + H2O = (6S)-5,6,7,8-tetrahydrofolate + L-serine. It participates in one-carbon metabolism; tetrahydrofolate interconversion. The protein operates within amino-acid biosynthesis; glycine biosynthesis; glycine from L-serine: step 1/1. Functionally, catalyzes the reversible interconversion of serine and glycine with tetrahydrofolate (THF) serving as the one-carbon carrier. This reaction serves as the major source of one-carbon groups required for the biosynthesis of purines, thymidylate, methionine, and other important biomolecules. Also exhibits THF-independent aldolase activity toward beta-hydroxyamino acids, producing glycine and aldehydes, via a retro-aldol mechanism. This Mycoplasmopsis synoviae (strain 53) (Mycoplasma synoviae) protein is Serine hydroxymethyltransferase.